Consider the following 843-residue polypeptide: Translation initiation factor IF-2 (843 aa).

Disordered stretches follow at residues Ala55 to Asp185 and Lys209 to Val228. Over residues Pro62–Glu106 the composition is skewed to basic and acidic residues. The span at Leu114 to Pro128 shows a compositional bias: basic residues. Positions Lys129–Gln141 are enriched in basic and acidic residues. A compositionally biased stretch (basic residues) spans Leu156–Lys165. Composition is skewed to basic and acidic residues over residues Lys171–Asp185 and Lys209–Lys221. Residues Glu342 to Lys511 form the tr-type G domain. The tract at residues Gly351–Thr358 is G1. Residue Gly351–Thr358 coordinates GTP. The tract at residues Gly376 to His380 is G2. The interval Asp397–Gly400 is G3. GTP-binding positions include Asp397–His401 and Asn451–Asp454. Positions Asn451 to Asp454 are G4. Positions Ser487–Lys489 are G5.

The protein belongs to the TRAFAC class translation factor GTPase superfamily. Classic translation factor GTPase family. IF-2 subfamily.

The protein localises to the cytoplasm. In terms of biological role, one of the essential components for the initiation of protein synthesis. Protects formylmethionyl-tRNA from spontaneous hydrolysis and promotes its binding to the 30S ribosomal subunits. Also involved in the hydrolysis of GTP during the formation of the 70S ribosomal complex. This is Translation initiation factor IF-2 from Nitratiruptor sp. (strain SB155-2).